Consider the following 194-residue polypeptide: Ribosomal RNA large subunit methyltransferase E (194 aa).

Residues G48, W50, D66, N82, and D110 each contribute to the S-adenosyl-L-methionine site. Residue K150 is the Proton acceptor of the active site.

The protein belongs to the class I-like SAM-binding methyltransferase superfamily. RNA methyltransferase RlmE family.

The protein resides in the cytoplasm. The catalysed reaction is uridine(2552) in 23S rRNA + S-adenosyl-L-methionine = 2'-O-methyluridine(2552) in 23S rRNA + S-adenosyl-L-homocysteine + H(+). Its function is as follows. Specifically methylates the uridine in position 2552 of 23S rRNA at the 2'-O position of the ribose in the fully assembled 50S ribosomal subunit. This chain is Ribosomal RNA large subunit methyltransferase E, found in Picrophilus torridus (strain ATCC 700027 / DSM 9790 / JCM 10055 / NBRC 100828 / KAW 2/3).